A 68-amino-acid polypeptide reads, in one-letter code: MSLEVRVTELESRLAFQEDTIQALNDELVEQHKRIERLQLQLSALARRQEELQGQVGIVEDEAPPPHY.

It belongs to the SlyX family.

This chain is Protein SlyX homolog, found in Ectopseudomonas mendocina (strain ymp) (Pseudomonas mendocina).